Here is a 994-residue protein sequence, read N- to C-terminus: Phosphoenolpyruvate carboxylase (994 aa).

Residues 1 to 67 (MKAVRSDKTT…GRTREDKDHP (67 aa)) are disordered. Composition is skewed to low complexity over residues 9–24 (TTQAATTAQAQKPAKA) and 34–57 (AAPQAANASARQPASAQAPAPKAN). Residues His204 and Lys646 contribute to the active site.

It belongs to the PEPCase type 1 family. It depends on Mg(2+) as a cofactor.

It catalyses the reaction oxaloacetate + phosphate = phosphoenolpyruvate + hydrogencarbonate. In terms of biological role, forms oxaloacetate, a four-carbon dicarboxylic acid source for the tricarboxylic acid cycle. The polypeptide is Phosphoenolpyruvate carboxylase (Paraburkholderia xenovorans (strain LB400)).